Reading from the N-terminus, the 560-residue chain is Alpha-farnesene synthase (560 aa).

Residues D308, D312, and E462 each coordinate Mg(2+). A DDXXD motif motif is present at residues 308–312 (DDIYD).

Belongs to the terpene synthase family. Tpsa subfamily. It depends on Mg(2+) as a cofactor. As to expression, expressed in the rind tissues of ripe fruits.

The protein localises to the cytoplasm. The enzyme catalyses (2E,6E)-farnesyl diphosphate = (3E,6E)-alpha-farnesene + diphosphate. It participates in secondary metabolite biosynthesis; terpenoid biosynthesis. Functionally, sesquiterpene synthase producing exclusively alpha-farnesene. Associated with the production of sesquiterpenes responsible for the aroma of the fruit. This chain is Alpha-farnesene synthase, found in Cucumis melo (Muskmelon).